Here is a 175-residue protein sequence, read N- to C-terminus: Cuticle protein 16.5, isoform A (175 aa).

19 consecutive repeat copies span residues 17-20 (AAPA), 25-28 (AAPA), 31-34 (AAPA), 38-41 (AAPA), 44-47 (AAPA), 51-54 (AAPA), 57-60 (AAPA), 64-67 (AAPA), 70-73 (AAPA), 77-80 (AAPA), 83-86 (AAPA), 91-94 (AAPA), 99-102 (AAPA), 106-109 (AAPA), 134-137 (AAPA), 144-147 (AAPA), 151-154 (AAPA), 158-161 (AAPA), and 165-168 (AAPA).

Its function is as follows. Component of the cuticle of migratory locust which contains more than 100 different structural proteins. The protein is Cuticle protein 16.5, isoform A of Locusta migratoria (Migratory locust).